Reading from the N-terminus, the 1383-residue chain is DNA-directed RNA polymerase subunit beta (1383 aa).

The protein belongs to the RNA polymerase beta chain family. As to quaternary structure, the RNAP catalytic core consists of 2 alpha, 1 beta, 1 beta' and 1 omega subunit. When a sigma factor is associated with the core the holoenzyme is formed, which can initiate transcription.

It catalyses the reaction RNA(n) + a ribonucleoside 5'-triphosphate = RNA(n+1) + diphosphate. Its function is as follows. DNA-dependent RNA polymerase catalyzes the transcription of DNA into RNA using the four ribonucleoside triphosphates as substrates. This is DNA-directed RNA polymerase subunit beta from Bartonella bacilliformis (strain ATCC 35685 / KC583 / Herrer 020/F12,63).